The sequence spans 365 residues: Glial fibrillary acidic protein (365 aa).

Residues 1-5 (REVDR) form a head region. Residues 2–310 (EVDRVMGLND…KLLEGEESRI (309 aa)) form the IF rod domain. The tract at residues 6 to 37 (VMGLNDRFASYIEKVRFLEQQNKMLVAELNQL) is coil 1A. Positions 38-48 (RGKEPSRLGDI) are linker 1. The segment at 49 to 147 (YQEELRELRR…EEEMRQLQEQ (99 aa)) is coil 1B. Residues 148–163 (LIAQQVHVDLDVSKPD) are linker 12. The tract at residues 164–185 (LTTALKEIRAQFEAMATSNMQE) is coil 2A. The linker 2 stretch occupies residues 186-189 (TEEW). The coil 2B stretch occupies residues 190–310 (YRSKFADLTD…KLLEGEESRI (121 aa)). The segment at 311–365 (TVPVQNFTNLQFRDTSLDTKLTPEAHVKRSIVVRTVETRDGEIIKESTTERKDLP) is tail.

This sequence belongs to the intermediate filament family.

This Carassius auratus (Goldfish) protein is Glial fibrillary acidic protein (gfap).